A 1392-amino-acid polypeptide reads, in one-letter code: DNA-directed RNA polymerase subunit beta (1392 aa).

The protein belongs to the RNA polymerase beta chain family. In terms of assembly, the RNAP catalytic core consists of 2 alpha, 1 beta, 1 beta' and 1 omega subunit. When a sigma factor is associated with the core the holoenzyme is formed, which can initiate transcription.

The catalysed reaction is RNA(n) + a ribonucleoside 5'-triphosphate = RNA(n+1) + diphosphate. Its function is as follows. DNA-dependent RNA polymerase catalyzes the transcription of DNA into RNA using the four ribonucleoside triphosphates as substrates. This chain is DNA-directed RNA polymerase subunit beta, found in Neisseria meningitidis serogroup A / serotype 4A (strain DSM 15465 / Z2491).